Reading from the N-terminus, the 151-residue chain is Type 4 adapter protein IcmW (151 aa).

As to quaternary structure, the T4BSS is a complex nanomachine composed of several subcomplexes. This subunit is part of the Type IV Coupling Complex (T4CC), a subcomplex composed of the DotLMNYZ core and the IcmSW-LvgA adapter subunits, linked by the C-terminal tail of DotL. Interacts with IcmS. IcmS and IcmW form a stable complex. Interaction with IcmS greatly enhances the stability of IcmW. Interacts directly with the type 4 coupling protein DotL. Interacts with LvgA. Interacts with effector proteins.

Its subcellular location is the cytoplasm. Its activity is regulated as follows. Interaction with DotL is critical for the export of IcmSW-dependent substrates. Functionally, component of the Dot/Icm type IVB secretion system (T4BSS), which is used to inject bacterial effector proteins into eukaryotic host cells. Part of a subcomplex which recruits effector proteins and delivers them to the core transmembrane subcomplex. The IcmS/IcmW protein complex plays an important role in protein translocation by interacting with multiple Dot/Icm effector proteins to facilitate their translocation into host cells. Interaction promotes conformational changes in the effector protein, which may facilitate display of a C-terminal translocation signal. May maintain the substrates in a translocation competent form. Required for intracellular growth in host cells, replicative phagosome formation and phagosome trafficking. The chain is Type 4 adapter protein IcmW from Legionella pneumophila subsp. pneumophila (strain Philadelphia 1 / ATCC 33152 / DSM 7513).